Reading from the N-terminus, the 323-residue chain is Mediator of RNA polymerase II transcription subunit 4 (323 aa).

A disordered region spans residues 1–36; sequence MLPFKKADSPFKSNPVSRVGSSTRLNQLGNIKSNPT. Over residues 11–36 the composition is skewed to polar residues; it reads FKSNPVSRVGSSTRLNQLGNIKSNPT. Positions 79–167 form a coiled coil; the sequence is MVQKVNEYER…VSYRNELKKL (89 aa). Basic and acidic residues-rich tracts occupy residues 241-262 and 282-303; these read HELGETDKENSNEVKTESKVDH and DEQRSKPPAASEHDTSKRKEEQ. Residues 241–323 form a disordered region; sequence HELGETDKEN…LFDPDDEYSD (83 aa).

This sequence belongs to the Mediator complex subunit 4 family. As to quaternary structure, component of the Mediator complex.

Its subcellular location is the nucleus. Component of the Mediator complex, a coactivator involved in the regulated transcription of nearly all RNA polymerase II-dependent genes. Mediator functions as a bridge to convey information from gene-specific regulatory proteins to the basal RNA polymerase II transcription machinery. Mediator is recruited to promoters by direct interactions with regulatory proteins and serves as a scaffold for the assembly of a functional preinitiation complex with RNA polymerase II and the general transcription factors. The sequence is that of Mediator of RNA polymerase II transcription subunit 4 (MED4) from Candida albicans (strain SC5314 / ATCC MYA-2876) (Yeast).